Consider the following 509-residue polypeptide: Maturase K (509 aa).

Belongs to the intron maturase 2 family. MatK subfamily.

The protein localises to the plastid. It is found in the chloroplast. Usually encoded in the trnK tRNA gene intron. Probably assists in splicing its own and other chloroplast group II introns. The protein is Maturase K of Hottonia palustris (Water-violet).